A 332-amino-acid chain; its full sequence is BRISC and BRCA1-A complex member 1 (332 aa).

Met1 bears the N-acetylmethionine mark. A disordered region spans residues 1–88; sequence MEVAEPSCPT…PPPAPEVQVR (88 aa). Over residues 10 to 23 the composition is skewed to acidic residues; it reads TEEEEEEEEEEEQS. Phosphoserine occurs at positions 32, 52, and 60. Over residues 70–83 the composition is skewed to pro residues; sequence GAGPKPWQVPPPAP. Residues 98–301 form a VWFA-like region; it reads VIICLDLSEE…LELHNCMAKL (204 aa).

Belongs to the BABAM1 family. Component of the ARISC complex, at least composed of UIMC1/RAP80, ABRAXAS1, BRCC3/BRCC36, BABAM2 and BABAM1/NBA1. Component of the BRCA1-A complex, at least composed of BRCA1, BARD1, UIMC1/RAP80, ABRAXAS1, BRCC3/BRCC36, BABAM2 and BABAM1/NBA1. In the BRCA1-A complex, interacts directly with ABRAXAS1 and BABAM2. Component of the BRISC complex, at least composed of ABRAXAS2, BRCC3/BRCC36, BABAM2 and BABAM1/NBA1. Identified in a complex with SHMT2 and the other subunits of the BRISC complex.

Its subcellular location is the cytoplasm. It is found in the nucleus. Component of the BRCA1-A complex, a complex that specifically recognizes 'Lys-63'-linked ubiquitinated histones H2A and H2AX at DNA lesions sites, leading to target the BRCA1-BARD1 heterodimer to sites of DNA damage at double-strand breaks (DSBs). The BRCA1-A complex also possesses deubiquitinase activity that specifically removes 'Lys-63'-linked ubiquitin on histones H2A and H2AX. In the BRCA1-A complex, it is required for the complex integrity and its localization at DSBs. Component of the BRISC complex, a multiprotein complex that specifically cleaves 'Lys-63'-linked ubiquitin in various substrates. In these 2 complexes, it is probably required to maintain the stability of BABAM2 and help the 'Lys-63'-linked deubiquitinase activity mediated by BRCC3/BRCC36 component. The BRISC complex is required for normal mitotic spindle assembly and microtubule attachment to kinetochores via its role in deubiquitinating NUMA1. Plays a role in interferon signaling via its role in the deubiquitination of the interferon receptor IFNAR1; deubiquitination increases IFNAR1 activity by enhancing its stability and cell surface expression. Down-regulates the response to bacterial lipopolysaccharide (LPS) via its role in IFNAR1 deubiquitination. The sequence is that of BRISC and BRCA1-A complex member 1 (BABAM1) from Bos taurus (Bovine).